A 330-amino-acid polypeptide reads, in one-letter code: tRNA-modifying protein YgfZ (330 aa).

Positions 28 and 190 each coordinate folate.

The protein belongs to the tRNA-modifying YgfZ family.

Its subcellular location is the cytoplasm. Folate-binding protein involved in regulating the level of ATP-DnaA and in the modification of some tRNAs. It is probably a key factor in regulatory networks that act via tRNA modification, such as initiation of chromosomal replication. The polypeptide is tRNA-modifying protein YgfZ (Yersinia pseudotuberculosis serotype IB (strain PB1/+)).